Reading from the N-terminus, the 98-residue chain is NADH-quinone oxidoreductase subunit K (98 aa).

Transmembrane regions (helical) follow at residues 1–21, 27–47, and 59–79; these read MGHL…GIFL, IVLL…FIAF, and FVFF…AILV.

This sequence belongs to the complex I subunit 4L family. As to quaternary structure, NDH-1 is composed of 14 different subunits. Subunits NuoA, H, J, K, L, M, N constitute the membrane sector of the complex.

The protein resides in the cell inner membrane. The enzyme catalyses a quinone + NADH + 5 H(+)(in) = a quinol + NAD(+) + 4 H(+)(out). Functionally, NDH-1 shuttles electrons from NADH, via FMN and iron-sulfur (Fe-S) centers, to quinones in the respiratory chain. The immediate electron acceptor for the enzyme in this species is believed to be ubiquinone. Couples the redox reaction to proton translocation (for every two electrons transferred, four hydrogen ions are translocated across the cytoplasmic membrane), and thus conserves the redox energy in a proton gradient. This is NADH-quinone oxidoreductase subunit K from Xanthomonas oryzae pv. oryzae (strain PXO99A).